Reading from the N-terminus, the 162-residue chain is UPF0262 protein HNE_1347 (162 aa).

It belongs to the UPF0262 family.

The chain is UPF0262 protein HNE_1347 from Hyphomonas neptunium (strain ATCC 15444).